The primary structure comprises 851 residues: Putative serine/threonine-protein kinase 019R (851 aa).

Disordered regions lie at residues M1–K24, P61–P91, G104–G160, G190–S216, and S340–R400. Over residues A125 to E141 the composition is skewed to low complexity. A compositionally biased stretch (basic residues) spans S196 to S216. The segment covering S340–S366 has biased composition (low complexity). Residues A456–M851 enclose the Protein kinase domain. ATP contacts are provided by residues I462 to V470 and K485. D608 functions as the Proton acceptor in the catalytic mechanism.

This sequence belongs to the protein kinase superfamily. Ser/Thr protein kinase family.

The enzyme catalyses L-seryl-[protein] + ATP = O-phospho-L-seryl-[protein] + ADP + H(+). It carries out the reaction L-threonyl-[protein] + ATP = O-phospho-L-threonyl-[protein] + ADP + H(+). This is Putative serine/threonine-protein kinase 019R from Dryophytes versicolor (chameleon treefrog).